A 194-amino-acid polypeptide reads, in one-letter code: Imidazoleglycerol-phosphate dehydratase (194 aa).

Belongs to the imidazoleglycerol-phosphate dehydratase family.

The protein localises to the cytoplasm. The enzyme catalyses D-erythro-1-(imidazol-4-yl)glycerol 3-phosphate = 3-(imidazol-4-yl)-2-oxopropyl phosphate + H2O. It functions in the pathway amino-acid biosynthesis; L-histidine biosynthesis; L-histidine from 5-phospho-alpha-D-ribose 1-diphosphate: step 6/9. The chain is Imidazoleglycerol-phosphate dehydratase from Thermus thermophilus (strain ATCC BAA-163 / DSM 7039 / HB27).